The following is a 657-amino-acid chain: Probable intron-encoded endonuclease aI2 (657 aa).

The tract at residues 1–245 (MKQMSYVTRW…TYEHLFWFFG (245 aa)) is COX1 exons 1 to 2 encoded. The next 6 helical transmembrane spans lie at 19–39 (IGMT…GMSV), 69–89 (LLMM…NFFL), 103–123 (LNNI…CSVL), 152–172 (AMFA…NFMV), 188–208 (PLFA…LPVL), and 269–289 (MYFI…ANMV). The segment at 246 to 657 (QWWPTNYVNN…KFENKWNKKF (412 aa)) is COX1 intron 2 encoded.

In the C-terminal section; belongs to the LAGLIDADG endonuclease family. This sequence in the N-terminal section; belongs to the heme-copper respiratory oxidase family. Post-translationally, the mature protein may arise from proteolytic cleavage of an in-frame translation of COX1 exons 1 and 2 plus intron 2, containing the aI2 open reading frame.

It is found in the mitochondrion. The protein resides in the membrane. Functionally, mitochondrial DNA endonuclease involved in intron homing. This chain is Probable intron-encoded endonuclease aI2 (aI2), found in Debaryomyces hansenii (strain ATCC 36239 / CBS 767 / BCRC 21394 / JCM 1990 / NBRC 0083 / IGC 2968) (Yeast).